The sequence spans 995 residues: Meckelin (995 aa).

The first 36 residues, 1–36 (MATRGGAGVAMAVWSLLSARAVTAFLLLFLPRFLQA), serve as a signal peptide directing secretion. The interval 37 to 280 (QTFSFPFQQP…FQFIFENTAG (244 aa)) is cysteine-rich. Residues 37–519 (QTFSFPFQQP…SVTYEMDHGE (483 aa)) lie on the Extracellular side of the membrane. Intrachain disulfides connect Cys-49-Cys-62, Cys-65-Cys-78, Cys-80-Cys-97, Cys-100-Cys-114, Cys-117-Cys-127, Cys-129-Cys-150, Cys-153-Cys-170, Cys-173-Cys-184, Cys-186-Cys-197, Cys-237-Cys-246, and Cys-253-Cys-268. An N-linked (GlcNAc...) asparagine glycan is attached at Asn-141. Asn-179 carries an N-linked (GlcNAc...) asparagine glycan. Asn-242 carries an N-linked (GlcNAc...) asparagine glycan. N-linked (GlcNAc...) asparagine glycosylation occurs at Asn-318. An intrachain disulfide couples Cys-357 to Cys-378. Residues 520–548 (AHVQTDIALGVLGGLAVLASLLKTAGWKR) traverse the membrane as a helical segment. Residues 549-558 (RIGSPMIDLQ) are Cytoplasmic-facing. A helical transmembrane segment spans residues 559–590 (TVVKFLVYYAGDLANVFFIITVGTGLYWLIFF). Over 591–603 (KAQKSVSVLLPMP) the chain is Extracellular. A helical transmembrane segment spans residues 604 to 631 (IQEERFVTYVGCAFALKALQFLHKLISQ). Residues 632-670 (ITIDVFFIDWERPKGKVLKAVEGEGGVRSATVPVSIWRT) lie on the Cytoplasmic side of the membrane. The segment at residues 671–679 (YFVANEWNE) is an intramembrane region (helical). The discontinuously helical transmembrane segment at 671-701 (YFVANEWNEIQTVRKINSLFQVLTVLFFLEV) threads the bilayer. An intramembrane segment occupies 680 to 688 (IQTVRKINS). The segment at residues 689–701 (LFQVLTVLFFLEV) is an intramembrane region (helical). The Extracellular portion of the chain corresponds to 702 to 731 (VGFKNLALMDSSSSLSRNPPSYIAPYSCIL). The segment at residues 732–757 (RYAVSAALWLAIGIIQVVFFAVFYER) is an intramembrane region (helical). The chain crosses the membrane as a discontinuously helical span at residues 732 to 771 (RYAVSAALWLAIGIIQVVFFAVFYERFIEDKIRQFVDLCS). The stretch at 758 to 762 (FIEDK) is an intramembrane region. The helical intramembrane region spans 763 to 771 (IRQFVDLCS). At 772 to 926 (MSNISVFLLS…SIFYNDEGYS (155 aa)) the chain is on the cytoplasmic side. Residues 828–917 (GQTFEIAISN…MEFMEPMEKS (90 aa)) are a coiled coil. Residues 927 to 929 (FSS) constitute an intramembrane region (helical). A discontinuously helical membrane pass occupies residues 927-952 (FSSVLYYGNEATLLIFDLLFFCVVDL). The stretch at 930 to 936 (VLYYGNE) is an intramembrane region. An intramembrane region (helical) is located at residues 937 to 952 (ATLLIFDLLFFCVVDL). The Extracellular segment spans residues 953–957 (ACQNF). A helical membrane pass occupies residues 958-985 (ILASFLTYLQQEIFRYIRNTVGQKNLAS). The Cytoplasmic portion of the chain corresponds to 986 to 995 (KTLVDQRFLI).

Homodimer. Part of the tectonic-like complex (also named B9 complex). Interacts with DNAJB9, DNAJC10 and mutated SFTPC. Interacts with SYNE2 during the early establishment of cell polarity. Interacts (via C-terminus) with FLNA. Interacts with TMEM218. Interacts with WNT5A. Interacts with ROR2. As to expression, widely expressed in adult and fetal tissues. Expressed at higher level in spinal cord.

The protein localises to the cell membrane. It is found in the endoplasmic reticulum membrane. Its subcellular location is the cell projection. The protein resides in the cilium. It localises to the cytoplasm. The protein localises to the cytoskeleton. It is found in the cilium basal body. In terms of biological role, required for ciliary structure and function. Part of the tectonic-like complex which is required for tissue-specific ciliogenesis and may regulate ciliary membrane composition. Involved in centrosome migration to the apical cell surface during early ciliogenesis. Involved in the regulation of cilia length and appropriate number through the control of centrosome duplication. Is a key regulator of stereociliary bundle orientation. Required for epithelial cell branching morphology. Essential for endoplasmic reticulum-associated degradation (ERAD) of surfactant protein C (SFTPC). Involved in the negative regulation of canonical Wnt signaling, and activation of the non-canonical cascade stimulated by WNT5A. In non-canonical Wnt signaling, it may act as ROR2 coreceptor. This Homo sapiens (Human) protein is Meckelin (TMEM67).